The sequence spans 529 residues: Bifunctional purine biosynthesis protein PurH (529 aa).

One can recognise an MGS-like domain in the interval M1 to V148.

Belongs to the PurH family.

It catalyses the reaction (6R)-10-formyltetrahydrofolate + 5-amino-1-(5-phospho-beta-D-ribosyl)imidazole-4-carboxamide = 5-formamido-1-(5-phospho-D-ribosyl)imidazole-4-carboxamide + (6S)-5,6,7,8-tetrahydrofolate. It carries out the reaction IMP + H2O = 5-formamido-1-(5-phospho-D-ribosyl)imidazole-4-carboxamide. The protein operates within purine metabolism; IMP biosynthesis via de novo pathway; 5-formamido-1-(5-phospho-D-ribosyl)imidazole-4-carboxamide from 5-amino-1-(5-phospho-D-ribosyl)imidazole-4-carboxamide (10-formyl THF route): step 1/1. Its pathway is purine metabolism; IMP biosynthesis via de novo pathway; IMP from 5-formamido-1-(5-phospho-D-ribosyl)imidazole-4-carboxamide: step 1/1. The protein is Bifunctional purine biosynthesis protein PurH of Klebsiella pneumoniae subsp. pneumoniae (strain ATCC 700721 / MGH 78578).